The following is a 596-amino-acid chain: Ulvan-active sulfatase (596 aa).

An N-terminal signal peptide occupies residues 1 to 27 (MLFLRFKFFNNRLLFVSVLCFVICVSC). Glutamate 58, aspartate 59, cysteine 97, aspartate 306, and histidine 307 together coordinate Ca(2+). Cysteine 97 acts as the Nucleophile in catalysis. Cysteine 97 carries the post-translational modification 3-oxoalanine (Cys).

Belongs to the sulfatase family. The cofactor is Ca(2+). In terms of processing, the conversion to 3-oxoalanine (also known as C-formylglycine, FGly), of a serine or cysteine residue in prokaryotes and of a cysteine residue in eukaryotes, is critical for catalytic activity.

Its subcellular location is the periplasm. Its function is as follows. Sulfatase involved in ulvan degradation. Ulvan is the main polysaccharide component of the Ulvales (green seaweed) cell wall. It is composed of disaccharide building blocks comprising 3-sulfated rhamnose (Rha3S) linked to D-glucuronic acid (GlcA), L-iduronic acid (IduA), or D-xylose (Xyl). The sulfatase desulfates Xyl2S-Rha3S, product of the degradation of ulvan by endo-acting alpha-1,4-L-rhamnosidase, to Xyl-Rha3S. The protein is Ulvan-active sulfatase of Formosa agariphila (strain DSM 15362 / KCTC 12365 / LMG 23005 / KMM 3901 / M-2Alg 35-1).